The following is a 157-amino-acid chain: SsrA-binding protein (157 aa).

The segment covering 138 to 151 has biased composition (basic and acidic residues); that stretch reads ATEAKRDWGREKQR. The tract at residues 138–157 is disordered; it reads ATEAKRDWGREKQRLLKQHS.

The protein belongs to the SmpB family.

The protein localises to the cytoplasm. Functionally, required for rescue of stalled ribosomes mediated by trans-translation. Binds to transfer-messenger RNA (tmRNA), required for stable association of tmRNA with ribosomes. tmRNA and SmpB together mimic tRNA shape, replacing the anticodon stem-loop with SmpB. tmRNA is encoded by the ssrA gene; the 2 termini fold to resemble tRNA(Ala) and it encodes a 'tag peptide', a short internal open reading frame. During trans-translation Ala-aminoacylated tmRNA acts like a tRNA, entering the A-site of stalled ribosomes, displacing the stalled mRNA. The ribosome then switches to translate the ORF on the tmRNA; the nascent peptide is terminated with the 'tag peptide' encoded by the tmRNA and targeted for degradation. The ribosome is freed to recommence translation, which seems to be the essential function of trans-translation. The polypeptide is SsrA-binding protein (Cereibacter sphaeroides (strain ATCC 17025 / ATH 2.4.3) (Rhodobacter sphaeroides)).